Reading from the N-terminus, the 1674-residue chain is E3 ubiquitin-protein ligase SHPRH (1674 aa).

A disordered region spans residues 1–26 (MSSRRKRAPPMKVDEERQQQLHWNMH). The span at 12–26 (KVDEERQQQLHWNMH) shows a compositional bias: basic and acidic residues. Phosphoserine occurs at positions 259 and 261. A Helicase ATP-binding; first part domain is found at 302–384 (YQREAVNWML…TVEVLALILT (83 aa)). 368 to 375 (DEMGLGKT) contributes to the ATP binding site. In terms of domain architecture, H15 spans 433–507 (HCPPTRVMIL…GFSGTFTLGK (75 aa)). Residues 524–548 (SPRKIEKELRKSVNKDADSEYLPSN) form a disordered region. A compositionally biased stretch (basic and acidic residues) spans 526-541 (RKIEKELRKSVNKDAD). The residue at position 626 (S626) is a Phosphoserine. Residues 649-700 (RFECICGEFDQIGHKPRVQCLKCHLWQHAKCVNYEEKNLKVKPFYCPHCLVA) form a PHD-type zinc finger. Positions 701–859 (MEPVSTRATL…FGLVVFLGIE (159 aa)) constitute a Helicase ATP-binding; second part domain. Positions 810 to 813 (DEAQ) match the DEAQ box motif. The segment at 1423–1470 (CPICARQLGKQWAVLTCGHCFCNECTSIIIEQYSVGSHRSSIKCAICR) adopts an RING-type zinc-finger fold. Positions 1505 to 1663 (AVVRTLMKIQ…ASVLTVAGLA (159 aa)) constitute a Helicase C-terminal domain.

Belongs to the SNF2/RAD54 helicase family. Homodimer. Interacts with HLTF, PCNA, UBE2N and RAD18. As to expression, broadly expressed (at protein level).

The catalysed reaction is S-ubiquitinyl-[E2 ubiquitin-conjugating enzyme]-L-cysteine + [acceptor protein]-L-lysine = [E2 ubiquitin-conjugating enzyme]-L-cysteine + N(6)-ubiquitinyl-[acceptor protein]-L-lysine.. The protein operates within protein modification; protein ubiquitination. Functionally, E3 ubiquitin-protein ligase involved in DNA repair. Upon genotoxic stress, accepts ubiquitin from the UBE2N-UBE2V2 E2 complex and transfers it to 'Lys-164' of PCNA which had been monoubiquitinated by UBE2A/B-RAD18, promoting the formation of non-canonical poly-ubiquitin chains linked through 'Lys-63'. This chain is E3 ubiquitin-protein ligase SHPRH (Shprh), found in Mus musculus (Mouse).